The sequence spans 326 residues: uncharacterized protein (326 aa).

Belongs to the transferase hexapeptide repeat family.

This is an uncharacterized protein from Escherichia coli (strain K12).